A 427-amino-acid polypeptide reads, in one-letter code: Glutamate-1-semialdehyde 2,1-aminomutase (427 aa).

Residue K265 is modified to N6-(pyridoxal phosphate)lysine.

Belongs to the class-III pyridoxal-phosphate-dependent aminotransferase family. HemL subfamily. Homodimer. Pyridoxal 5'-phosphate is required as a cofactor.

The protein localises to the cytoplasm. It catalyses the reaction (S)-4-amino-5-oxopentanoate = 5-aminolevulinate. It participates in porphyrin-containing compound metabolism; protoporphyrin-IX biosynthesis; 5-aminolevulinate from L-glutamyl-tRNA(Glu): step 2/2. The protein is Glutamate-1-semialdehyde 2,1-aminomutase of Pseudomonas fluorescens (strain SBW25).